A 2242-amino-acid chain; its full sequence is Transcription factor sma-9 (2242 aa).

Positions 120–383 (HQLAQQQAQQ…QQAQQAQLAQ (264 aa)) form a coiled coil. Residues 317 to 330 (AAQQAQAQNNASQQ) show a composition bias toward low complexity. Disordered regions lie at residues 317–344 (AAQQ…SSTP), 494–553 (TPVA…SMSD), 583–617 (GAQS…SRSQ), 712–754 (LAAH…SSFP), and 1323–1349 (EDST…SPPL). Residues 331–344 (RPSVASTPALSSTP) are compositionally biased toward polar residues. 2 stretches are compositionally biased toward low complexity: residues 494–523 (TPVA…ATSS) and 539–550 (SSSKAASSGNES). Over residues 583 to 601 (GAQSSVDHDSNSGGSTRTS) the composition is skewed to polar residues. The segment covering 1324-1338 (DSTSAEPSTSGQSLL) has biased composition (polar residues). 5 C2H2-type zinc fingers span residues 1447–1469 (YICD…IKSH), 1475–1499 (FNCT…SKTH), 1700–1722 (LKCD…QHTH), 1734–1760 (YQCS…HGVH), and 1790–1814 (FMCV…SKTH). Residues 2029–2039 (SITSPIVSSST) show a composition bias toward low complexity. Disordered stretches follow at residues 2029–2059 (SITS…PTHT) and 2085–2107 (STDK…PRPI). The span at 2085 to 2099 (STDKAHASESLSDRL) shows a compositional bias: basic and acidic residues. C2H2-type zinc fingers lie at residues 2111-2134 (TKCQ…HVDH) and 2143-2167 (YKCP…VTAH). A disordered region spans residues 2219–2242 (HELYAQTQQGAGSSTSNQSPKAAN). Residues 2223–2242 (AQTQQGAGSSTSNQSPKAAN) are compositionally biased toward polar residues.

In terms of tissue distribution, expressed in the ventral nerve cord (VNC), pharynx, intestine and seam cells (at protein level).

The protein resides in the nucleus. Transcription factor, probably acting as a transcriptional activator and repressor, involved in the TGF-beta-like dbl-1 signaling pathway. Plays a role in regulation of body size, and patterning of male-specific genital sensilla (simple sense organs), known as rays, and mating-associated structures, spicules. Required for the dorsoventral patterning of the postembryonic mesodermal lineage (M lineage), acting by antagonizing the TGF-beta-like dbl-1 signaling pathway, in part by repressing expression of transcription factor unc-130. Involved in egg-laying, perhaps via modulation of cholinergic neurotransmission. Involved in production of reactive oxygen species (ROS), acting downstream of the dbl-1 signaling pathway. Plays a role in the mitochondrial unfolded protein response (mtUPR). May play a role in modulating lifespan and in responses to proteotoxic stress. Its function is as follows. Transcription factor, probably acting as a transcriptional activator. Required for patterning of male-specific genital sensilla (simple sense organs), known as rays. Dispensable for regulation of body size. The protein is Transcription factor sma-9 of Caenorhabditis elegans.